We begin with the raw amino-acid sequence, 181 residues long: Ribulose bisphosphate carboxylase small subunit, chloroplastic 1 (181 aa).

The transit peptide at 1-57 (MASSIVSSAAAATRSNVAQASMVAPFTGLKSAASFPVTKKNNNVDITSLASNGGRVR) directs the protein to the chloroplast.

This sequence belongs to the RuBisCO small chain family. In terms of assembly, (Microbial infection) Binds to tobamovirus movement protein; this interaction seems required for viral systemic movement. Heterohexadecamer of 8 large and 8 small subunits.

The protein resides in the plastid. It is found in the chloroplast. It localises to the cell junction. The protein localises to the plasmodesma. Functionally, ruBisCO catalyzes two reactions: the carboxylation of D-ribulose 1,5-bisphosphate, the primary event in carbon dioxide fixation, as well as the oxidative fragmentation of the pentose substrate. Both reactions occur simultaneously and in competition at the same active site. Although the small subunit is not catalytic it is essential for maximal activity. Involved in antiviral defenses. This Solanum lycopersicum (Tomato) protein is Ribulose bisphosphate carboxylase small subunit, chloroplastic 1.